A 373-amino-acid polypeptide reads, in one-letter code: tRNA-specific 2-thiouridylase MnmA (373 aa).

Residues 12–19 (GMSGGVDS) and Met38 contribute to the ATP site. Residues 98–100 (NPD) form an interaction with target base in tRNA region. The Nucleophile role is filled by Cys103. Cys103 and Cys200 form a disulfide bridge. Gly127 contacts ATP. Residues 150 to 152 (KDQ) form an interaction with tRNA region. Cys200 acts as the Cysteine persulfide intermediate in catalysis. The tract at residues 312 to 313 (RY) is interaction with tRNA.

Belongs to the MnmA/TRMU family.

It is found in the cytoplasm. It catalyses the reaction S-sulfanyl-L-cysteinyl-[protein] + uridine(34) in tRNA + AH2 + ATP = 2-thiouridine(34) in tRNA + L-cysteinyl-[protein] + A + AMP + diphosphate + H(+). In terms of biological role, catalyzes the 2-thiolation of uridine at the wobble position (U34) of tRNA, leading to the formation of s(2)U34. The protein is tRNA-specific 2-thiouridylase MnmA of Streptococcus pyogenes serotype M28 (strain MGAS6180).